We begin with the raw amino-acid sequence, 131 residues long: Large ribosomal subunit protein bL12c (131 aa).

Residues 106-125 (KDNTNKENSEEIKQQLEEAG) are compositionally biased toward basic and acidic residues. The tract at residues 106–131 (KDNTNKENSEEIKQQLEEAGAKVSIK) is disordered.

It belongs to the bacterial ribosomal protein bL12 family. Homodimer. Part of the ribosomal stalk of the 50S ribosomal subunit. Forms a multimeric L10(L12)X complex, where L10 forms an elongated spine to which 2 to 4 L12 dimers bind in a sequential fashion. Binds GTP-bound translation factors.

The protein resides in the plastid. Its subcellular location is the chloroplast. In terms of biological role, forms part of the ribosomal stalk which helps the ribosome interact with GTP-bound translation factors. Is thus essential for accurate translation. The chain is Large ribosomal subunit protein bL12c from Gracilaria tenuistipitata var. liui (Red alga).